The following is a 464-amino-acid chain: Bifunctional protein GlmU (464 aa).

The interval 1–232 (MKHDELAAVI…ADEAMGINDR (232 aa)) is pyrophosphorylase. Residues 11–14 (LAAG), Lys-25, Gln-76, and 81–82 (GT) each bind UDP-N-acetyl-alpha-D-glucosamine. Asp-106 is a binding site for Mg(2+). UDP-N-acetyl-alpha-D-glucosamine is bound by residues Gly-143, Glu-157, Asn-172, and Asn-230. A Mg(2+)-binding site is contributed by Asn-230. The interval 233–253 (VQLAQASALMRRRINENLMRA) is linker. The N-acetyltransferase stretch occupies residues 254–464 (GVSFIDPEQT…RHDPKCKNKD (211 aa)). Positions 336 and 354 each coordinate UDP-N-acetyl-alpha-D-glucosamine. Catalysis depends on His-366, which acts as the Proton acceptor. Residues Tyr-369 and Asn-380 each contribute to the UDP-N-acetyl-alpha-D-glucosamine site. Residues 389–390 (NY), Ser-408, Ala-426, and Arg-443 each bind acetyl-CoA.

It in the N-terminal section; belongs to the N-acetylglucosamine-1-phosphate uridyltransferase family. The protein in the C-terminal section; belongs to the transferase hexapeptide repeat family. As to quaternary structure, homotrimer. It depends on Mg(2+) as a cofactor.

It localises to the cytoplasm. The enzyme catalyses alpha-D-glucosamine 1-phosphate + acetyl-CoA = N-acetyl-alpha-D-glucosamine 1-phosphate + CoA + H(+). The catalysed reaction is N-acetyl-alpha-D-glucosamine 1-phosphate + UTP + H(+) = UDP-N-acetyl-alpha-D-glucosamine + diphosphate. The protein operates within nucleotide-sugar biosynthesis; UDP-N-acetyl-alpha-D-glucosamine biosynthesis; N-acetyl-alpha-D-glucosamine 1-phosphate from alpha-D-glucosamine 6-phosphate (route II): step 2/2. It participates in nucleotide-sugar biosynthesis; UDP-N-acetyl-alpha-D-glucosamine biosynthesis; UDP-N-acetyl-alpha-D-glucosamine from N-acetyl-alpha-D-glucosamine 1-phosphate: step 1/1. It functions in the pathway bacterial outer membrane biogenesis; LPS lipid A biosynthesis. Catalyzes the last two sequential reactions in the de novo biosynthetic pathway for UDP-N-acetylglucosamine (UDP-GlcNAc). The C-terminal domain catalyzes the transfer of acetyl group from acetyl coenzyme A to glucosamine-1-phosphate (GlcN-1-P) to produce N-acetylglucosamine-1-phosphate (GlcNAc-1-P), which is converted into UDP-GlcNAc by the transfer of uridine 5-monophosphate (from uridine 5-triphosphate), a reaction catalyzed by the N-terminal domain. The polypeptide is Bifunctional protein GlmU (Syntrophotalea carbinolica (strain DSM 2380 / NBRC 103641 / GraBd1) (Pelobacter carbinolicus)).